We begin with the raw amino-acid sequence, 624 residues long: Phosphatidylserine decarboxylase proenzyme 2 (624 aa).

Residues 1–30 (MGHSPSRHNACGGGGGDGESPPSPLPSRFE) form a disordered region. One can recognise a C2 domain in the interval 16 to 129 (GDGESPPSPL…KDLDEHSEVL (114 aa)). EF-hand domains lie at 156–191 (TEQS…FGNK) and 192–227 (LAVA…QQEK). The Ca(2+) site is built by aspartate 169, asparagine 171, aspartate 173, glutamate 175, glutamate 180, aspartate 205, asparagine 207, aspartate 209, and glutamate 216. Catalysis depends on charge relay system; for autoendoproteolytic cleavage activity residues aspartate 425, histidine 481, and serine 569. Serine 569 serves as the catalytic Schiff-base intermediate with substrate; via pyruvic acid; for decarboxylase activity. At serine 569 the chain carries Pyruvic acid (Ser); by autocatalysis.

It belongs to the phosphatidylserine decarboxylase family. PSD-B subfamily. Eukaryotic type II sub-subfamily. Heterodimer of a large membrane-associated beta subunit and a small pyruvoyl-containing alpha subunit. Pyruvate serves as cofactor. In terms of processing, is synthesized initially as an inactive proenzyme. Formation of the active enzyme involves a self-maturation process in which the active site pyruvoyl group is generated from an internal serine residue via an autocatalytic post-translational modification. Two non-identical subunits are generated from the proenzyme in this reaction, and the pyruvate is formed at the N-terminus of the alpha chain, which is derived from the carboxyl end of the proenzyme. The autoendoproteolytic cleavage occurs by a canonical serine protease mechanism, in which the side chain hydroxyl group of the serine supplies its oxygen atom to form the C-terminus of the beta chain, while the remainder of the serine residue undergoes an oxidative deamination to produce ammonia and the pyruvoyl prosthetic group on the alpha chain. During this reaction, the Ser that is part of the protease active site of the proenzyme becomes the pyruvoyl prosthetic group, which constitutes an essential element of the active site of the mature decarboxylase.

Its subcellular location is the vacuole membrane. It is found in the endoplasmic reticulum membrane. The enzyme catalyses a 1,2-diacyl-sn-glycero-3-phospho-L-serine + H(+) = a 1,2-diacyl-sn-glycero-3-phosphoethanolamine + CO2. It participates in phospholipid metabolism; phosphatidylethanolamine biosynthesis; phosphatidylethanolamine from CDP-diacylglycerol: step 2/2. Its function is as follows. Catalyzes the formation of phosphatidylethanolamine (PtdEtn) from phosphatidylserine (PtdSer). Plays a central role in phospholipid metabolism and in the interorganelle trafficking of phosphatidylserine. The polypeptide is Phosphatidylserine decarboxylase proenzyme 2 (Oryza sativa subsp. japonica (Rice)).